The sequence spans 209 residues: Large ribosomal subunit protein uL3 (209 aa).

Positions 126–165 (HNFGGGSRTHGQSDRLRAPGSVGGSSDPSRTFRGTRMAGR) are disordered.

The protein belongs to the universal ribosomal protein uL3 family. As to quaternary structure, part of the 50S ribosomal subunit. Forms a cluster with proteins L14 and L19.

Functionally, one of the primary rRNA binding proteins, it binds directly near the 3'-end of the 23S rRNA, where it nucleates assembly of the 50S subunit. This chain is Large ribosomal subunit protein uL3, found in Chlorobium limicola (strain DSM 245 / NBRC 103803 / 6330).